The primary structure comprises 373 residues: Exonuclease V (373 aa).

C92 contributes to the [4Fe-4S] cluster binding site. 2 residues coordinate Mg(2+): D182 and E196. Residues C343, C346, and C352 each coordinate [4Fe-4S] cluster.

It belongs to the EXO5 family. In terms of assembly, monomer; monomeric form has weak exonuclease activity. Homodimer; homodimeric form is unsure but has much higher exonuclease activity, suggesting that it could homodimerize upon DNA-binding. Interacts with the replication protein A (RPA) complex. It depends on [4Fe-4S] cluster as a cofactor. Requires Mg(2+) as cofactor.

The protein localises to the nucleus. The protein resides in the cytoplasm. It is found in the cytosol. In terms of biological role, single-stranded DNA (ssDNA) bidirectional exonuclease involved in DNA repair. Probably involved in DNA repair following ultraviolet (UV) irradiation and interstrand cross-links (ICLs) damage. Has both 5'-3' and 3'-5' exonuclease activities with a strong preference for 5'-ends. Acts as a sliding exonuclease that loads at ssDNA ends and then slides along the ssDNA prior to cutting; however the sliding and the 3'-5' exonuclease activities are abolished upon binding to the replication protein A (RPA) complex that enforces 5'-directionality activity. The polypeptide is Exonuclease V (EXO5) (Homo sapiens (Human)).